The following is a 205-amino-acid chain: Putative 3-methyladenine DNA glycosylase (205 aa).

Belongs to the DNA glycosylase MPG family.

The protein is Putative 3-methyladenine DNA glycosylase of Clostridium acetobutylicum (strain ATCC 824 / DSM 792 / JCM 1419 / IAM 19013 / LMG 5710 / NBRC 13948 / NRRL B-527 / VKM B-1787 / 2291 / W).